A 364-amino-acid polypeptide reads, in one-letter code: MALSRLMIRDFRNISVADLSLAADFNFLVGANGSGKTSVLEAIYTLGHGRAFRSLQSGRVIRHEQPEFVLHGRIEAGNVDARATSVGLSRNRLGDSTVRIDGSDGHKVAELAQLLPMQLITPEGFTLLNGGPKYRRAFMDWGCFHNEPGFFTAWSNLRRLLKQRNAALRQVSRYQQLRVWDQELIPLANRISEWRADYSAAIAADITATCAQFLPEFRLDFSFQRGWDKESDFGELLERQFERDRALTYTASGPHKADFRIRAEGVPVEDILSRGQLKLLMCALRLAQGEFLTHRNGRRCLYLIDDFASELDTGRRRLLAERLKATHAQVFVSAVSADQIRDIPDEKGKMFKVEQGKISLQSEV.

Position 30 to 37 (30 to 37 (GANGSGKT)) interacts with ATP.

Belongs to the RecF family.

It localises to the cytoplasm. Its function is as follows. The RecF protein is involved in DNA metabolism; it is required for DNA replication and normal SOS inducibility. RecF binds preferentially to single-stranded, linear DNA. It also seems to bind ATP. This Sodalis glossinidius protein is DNA replication and repair protein RecF.